Reading from the N-terminus, the 818-residue chain is Patatin-like phospholipase domain-containing protein YALI0D16379g (818 aa).

2 disordered regions span residues 1–50 (MLKL…RDVN) and 154–178 (EEKRRRGKSKKDKEGSEGDKTKTKE). Residues 22–38 (SQQLTLDSPEGSETSSR) show a composition bias toward polar residues. Residues 164–178 (KDKEGSEGDKTKTKE) are compositionally biased toward basic and acidic residues. The helical transmembrane segment at 223 to 243 (WPALFFIGMWLLFLTTIYASV) threads the bilayer. Residues 398-589 (LCLSGGGCFA…RTDIPVDALN (192 aa)) form the PNPLA domain. The GXSXG motif lies at 429 to 433 (GTSGG). Serine 431 serves as the catalytic Nucleophile. Aspartate 576 acts as the Proton acceptor in catalysis. Positions 781–805 (AGTDISSSNSDYDHEPQWEMDEGDS) are disordered.

This sequence belongs to the PLPL family.

The protein resides in the membrane. Its function is as follows. Probable lipid hydrolase. This Yarrowia lipolytica (strain CLIB 122 / E 150) (Yeast) protein is Patatin-like phospholipase domain-containing protein YALI0D16379g.